A 428-amino-acid chain; its full sequence is Enolase (428 aa).

Gln163 provides a ligand contact to (2R)-2-phosphoglycerate. Catalysis depends on Glu205, which acts as the Proton donor. Positions 242, 286, and 313 each coordinate Mg(2+). Lys338, Arg367, Ser368, and Lys389 together coordinate (2R)-2-phosphoglycerate. Lys338 functions as the Proton acceptor in the catalytic mechanism.

Belongs to the enolase family. Mg(2+) serves as cofactor.

It localises to the cytoplasm. Its subcellular location is the secreted. It is found in the cell surface. The enzyme catalyses (2R)-2-phosphoglycerate = phosphoenolpyruvate + H2O. It participates in carbohydrate degradation; glycolysis; pyruvate from D-glyceraldehyde 3-phosphate: step 4/5. Functionally, catalyzes the reversible conversion of 2-phosphoglycerate (2-PG) into phosphoenolpyruvate (PEP). It is essential for the degradation of carbohydrates via glycolysis. This chain is Enolase, found in Syntrophus aciditrophicus (strain SB).